Consider the following 87-residue polypeptide: Mitotic-spindle organizing protein 1 (87 aa).

Belongs to the MOZART1 family. Part of the gamma-tubulin complex.

The protein resides in the cytoplasm. It is found in the cytoskeleton. The protein localises to the microtubule organizing center. It localises to the spindle pole body. Required for gamma-tubulin complex recruitment to the microtubule organizing center (MTOC). The polypeptide is Mitotic-spindle organizing protein 1 (Chaetomium globosum (strain ATCC 6205 / CBS 148.51 / DSM 1962 / NBRC 6347 / NRRL 1970) (Soil fungus)).